We begin with the raw amino-acid sequence, 251 residues long: 3-deoxy-manno-octulosonate cytidylyltransferase (251 aa).

Belongs to the KdsB family.

The protein resides in the cytoplasm. It catalyses the reaction 3-deoxy-alpha-D-manno-oct-2-ulosonate + CTP = CMP-3-deoxy-beta-D-manno-octulosonate + diphosphate. Its pathway is nucleotide-sugar biosynthesis; CMP-3-deoxy-D-manno-octulosonate biosynthesis; CMP-3-deoxy-D-manno-octulosonate from 3-deoxy-D-manno-octulosonate and CTP: step 1/1. The protein operates within bacterial outer membrane biogenesis; lipopolysaccharide biosynthesis. In terms of biological role, activates KDO (a required 8-carbon sugar) for incorporation into bacterial lipopolysaccharide in Gram-negative bacteria. The chain is 3-deoxy-manno-octulosonate cytidylyltransferase from Brucella abortus (strain 2308).